The following is a 632-amino-acid chain: MAU2 chromatid cohesion factor homolog (632 aa).

TPR repeat units lie at residues 453–486 (GGFYYVQGLHAFHKNSFHEAKRFLRETLKMANAE) and 493–526 (SCSLVLLSHVFLSIGNSKESMNMVTPAMQLASKI).

Belongs to the SCC4/mau-2 family. In terms of assembly, interacts with Nipped-B to form the cohesin loading complex.

The protein resides in the nucleus. It is found in the nucleoplasm. Required for association of the cohesin complex with chromatin during interphase. Plays a role in sister chromatid cohesion and normal progression through prometaphase. This is MAU2 chromatid cohesion factor homolog from Drosophila sechellia (Fruit fly).